The following is a 345-amino-acid chain: Ribosomal RNA small subunit methyltransferase C (345 aa).

The protein belongs to the methyltransferase superfamily. RsmC family. Monomer.

It is found in the cytoplasm. It catalyses the reaction guanosine(1207) in 16S rRNA + S-adenosyl-L-methionine = N(2)-methylguanosine(1207) in 16S rRNA + S-adenosyl-L-homocysteine + H(+). In terms of biological role, specifically methylates the guanine in position 1207 of 16S rRNA in the 30S particle. This chain is Ribosomal RNA small subunit methyltransferase C, found in Shewanella denitrificans (strain OS217 / ATCC BAA-1090 / DSM 15013).